The chain runs to 133 residues: MNVIEQLRKEEADRLLAQRKVPEFRPGDTVRVNVRIKEGDRERVQAYEGVCIARAGQGVDENFTVRKISFGEGVERVFPILSPMIESIEVKRRGVVRRAKLYYLRDRRGKSARIAERQMTAASKEEPAEKSEA.

The interval 114-133 is disordered; sequence IAERQMTAASKEEPAEKSEA. Basic and acidic residues predominate over residues 123-133; sequence SKEEPAEKSEA.

It belongs to the bacterial ribosomal protein bL19 family.

In terms of biological role, this protein is located at the 30S-50S ribosomal subunit interface and may play a role in the structure and function of the aminoacyl-tRNA binding site. In Phenylobacterium zucineum (strain HLK1), this protein is Large ribosomal subunit protein bL19.